A 21-amino-acid polypeptide reads, in one-letter code: Putative pancreatic polypeptide 2 (21 aa).

It belongs to the NPY family.

This chain is Putative pancreatic polypeptide 2 (PPY2P), found in Homo sapiens (Human).